The primary structure comprises 259 residues: Flagellar brake protein YcgR (259 aa).

Residues Gln129–Lys246 form the PilZ domain.

It belongs to the YcgR family. As to quaternary structure, monomer. Interacts with the flagellar basal bodies.

The protein localises to the bacterial flagellum basal body. In terms of biological role, acts as a flagellar brake, regulating swimming and swarming in a bis-(3'-5') cyclic diguanylic acid (c-di-GMP)-dependent manner. Binds 1 c-di-GMP dimer per subunit. Increasing levels of c-di-GMP lead to decreased motility. This chain is Flagellar brake protein YcgR, found in Azoarcus sp. (strain BH72).